Consider the following 235-residue polypeptide: Protein Thf1 (235 aa).

The stretch at 183-204 (DKLNKDLELYRSNLDKMAQALV) forms a coiled coil. Positions 213 to 235 (DRKKREQRKQQSTAPVAPPSSNE) are disordered. Positions 222–235 (QQSTAPVAPPSSNE) are enriched in polar residues.

It belongs to the THF1 family.

May be involved in photosynthetic membrane biogenesis. The polypeptide is Protein Thf1 (Nostoc punctiforme (strain ATCC 29133 / PCC 73102)).